Here is a 465-residue protein sequence, read N- to C-terminus: ATP synthase subunit beta (465 aa).

Residue 148–155 (GGAGVGKT) coordinates ATP.

The protein belongs to the ATPase alpha/beta chains family. As to quaternary structure, F-type ATPases have 2 components, CF(1) - the catalytic core - and CF(0) - the membrane proton channel. CF(1) has five subunits: alpha(3), beta(3), gamma(1), delta(1), epsilon(1). CF(0) has three main subunits: a(1), b(2) and c(9-12). The alpha and beta chains form an alternating ring which encloses part of the gamma chain. CF(1) is attached to CF(0) by a central stalk formed by the gamma and epsilon chains, while a peripheral stalk is formed by the delta and b chains.

Its subcellular location is the cell inner membrane. The catalysed reaction is ATP + H2O + 4 H(+)(in) = ADP + phosphate + 5 H(+)(out). In terms of biological role, produces ATP from ADP in the presence of a proton gradient across the membrane. The catalytic sites are hosted primarily by the beta subunits. In Neisseria meningitidis serogroup A / serotype 4A (strain DSM 15465 / Z2491), this protein is ATP synthase subunit beta.